Here is a 1381-residue protein sequence, read N- to C-terminus: Hepatocyte growth factor receptor (1381 aa).

Residues 1 to 24 (MKAPTVLTPGILVLLFILVQRSNG) form the signal peptide. The Extracellular portion of the chain corresponds to 25–932 (ECKEALTKSE…VIVQPDQNFT (908 aa)). The Sema domain maps to 27 to 515 (KEALTKSEMN…TGKKITKIPL (489 aa)). N-linked (GlcNAc...) asparagine glycosylation is present at Asn45. 4 disulfides stabilise this stretch: Cys95-Cys101, Cys98-Cys160, Cys133-Cys141, and Cys172-Cys175. N-linked (GlcNAc...) asparagine glycosylation is present at Asn106. A glycan (N-linked (GlcNAc...) asparagine) is linked at Asn149. Residue Asn202 is glycosylated (N-linked (GlcNAc...) asparagine). Cystine bridges form between Cys298/Cys363 and Cys385/Cys397. An N-linked (GlcNAc...) asparagine glycan is attached at Asn399. Cystine bridges form between Cys520-Cys538, Cys526-Cys561, Cys529-Cys545, and Cys541-Cys551. IPT/TIG domains are found at residues 563–655 (PTIY…FSYV), 657–739 (PIIT…FSYR), and 742–836 (PIVY…LIYV). O-linked (Man) threonine glycosylation occurs at Thr582. Residues Asn607 and Asn635 are each glycosylated (N-linked (GlcNAc...) asparagine). O-linked (Man) threonine glycosylation is found at Thr676 and Thr761. N-linked (GlcNAc...) asparagine glycans are attached at residues Asn785, Asn879, and Asn930. Residues 933-955 (GLIAGVVSISIALLLLLGLFLWL) traverse the membrane as a helical segment. Over 956-1381 (KKRKQIKDLG…QDNADGEVDT (426 aa)) the chain is Cytoplasmic. The residue at position 966 (Ser966) is a Phosphoserine. Residue Thr977 is modified to Phosphothreonine. 3 positions are modified to phosphoserine: Ser990, Ser997, and Ser1000. At Tyr1003 the chain carries Phosphotyrosine. The Protein kinase domain occupies 1078–1345 (VHFNEVIGRG…RISAIFSAFI (268 aa)). ATP contacts are provided by residues 1084–1092 (IGRGHFGCV) and Lys1110. Catalysis depends on Asp1204, which acts as the Proton acceptor. The tract at residues 1212-1381 (LDEKFTVKVA…QDNADGEVDT (170 aa)) is interaction with RANBP9. Phosphotyrosine is present on Tyr1230. A phosphotyrosine; by autocatalysis mark is found at Tyr1234 and Tyr1235. Thr1289 bears the Phosphothreonine mark. An interaction with MUC20 region spans residues 1320 to 1359 (WHPKAEMRPSFSELVSRISAIFSAFIGEHYVHVNATYVNV). Phosphotyrosine; by autocatalysis is present on residues Tyr1349 and Tyr1356. Tyr1365 carries the phosphotyrosine modification.

It belongs to the protein kinase superfamily. Tyr protein kinase family. In terms of assembly, heterodimer made of an alpha chain (50 kDa) and a beta chain (145 kDa) which are disulfide linked. Binds PLXNB1. Interacts when phosphorylated with downstream effectors including STAT3, PIK3R1, SRC, PCLG1, GRB2 and GAB1. Interacts with SPSB1, SPSB2 and SPSB4. Interacts with INPP5D/SHIP1. When phosphorylated at Tyr-1356, interacts with INPPL1/SHIP2. Interacts with RANBP9 and RANBP10, as well as SPSB1, SPSB2, SPSB3 and SPSB4. SPSB1 binding occurs in the presence and in the absence of HGF, however HGF treatment has a positive effect on this interaction. Interacts with MUC20; prevents interaction with GRB2 and suppresses hepatocyte growth factor-induced cell proliferation. Interacts with GRB10. Interacts with PTPN1 and PTPN2. Interacts with tensin TNS3. Interacts (when phosphorylated) with tensin TNS4 (via SH2 domain); the interaction increases MET protein stability by inhibiting MET endocytosis and subsequent lysosomal degradation. Post-translationally, autophosphorylated in response to ligand binding on Tyr-1234 and Tyr-1235 in the kinase domain leading to further phosphorylation of Tyr-1349 and Tyr-1356 in the C-terminal multifunctional docking site. Dephosphorylated by PTPRJ at Tyr-1349 and Tyr-1365. Dephosphorylated by PTPN1 and PTPN2. In terms of processing, ubiquitinated. Ubiquitination by CBL regulates the receptor stability and activity through proteasomal degradation. O-mannosylation of IPT/TIG domains by TMEM260 is required for protein maturation. O-mannosylated residues are composed of single mannose glycans that are not elongated or modified.

The protein localises to the membrane. It carries out the reaction L-tyrosyl-[protein] + ATP = O-phospho-L-tyrosyl-[protein] + ADP + H(+). With respect to regulation, in its inactive state, the C-terminal tail interacts with the catalytic domain and inhibits the kinase activity. Upon ligand binding, the C-terminal tail is displaced and becomes phosphorylated, thus increasing the kinase activity. Its function is as follows. Receptor tyrosine kinase that transduces signals from the extracellular matrix into the cytoplasm by binding to hepatocyte growth factor/HGF ligand. Regulates many physiological processes including proliferation, scattering, morphogenesis and survival. Ligand binding at the cell surface induces autophosphorylation of MET on its intracellular domain that provides docking sites for downstream signaling molecules. Following activation by ligand, interacts with the PI3-kinase subunit PIK3R1, PLCG1, SRC, GRB2, STAT3 or the adapter GAB1. Recruitment of these downstream effectors by MET leads to the activation of several signaling cascades including the RAS-ERK, PI3 kinase-AKT, or PLCgamma-PKC. The RAS-ERK activation is associated with the morphogenetic effects while PI3K/AKT coordinates prosurvival effects. During embryonic development, MET signaling plays a role in gastrulation, development and migration of muscles and neuronal precursors, angiogenesis and kidney formation. In adults, participates in wound healing as well as organ regeneration and tissue remodeling. Also promotes differentiation and proliferation of hematopoietic cells. In Ateles geoffroyi (Black-handed spider monkey), this protein is Hepatocyte growth factor receptor (MET).